The primary structure comprises 228 residues: MKDNLKIMDLPKNERPRERLFRYGSEALSNSELLAVILGTGIKGENIVSLSNRIIKDNGGLNGIFNSDLEDFVSISGVGKAKAAKILAMAELSKRFKSYKDGDDYRICSPQDAAVLVMEEMRGMKQEHLKVILLNTKNMVIGIKNVFIGTLNSSIVHPREIFFYAIKKNSASIILCHNHPSGDPSPSNEDVNVTFRLKKCGELLGIQLVDHLIIGNGIFISLKEKGIL.

The region spanning 106 to 228 is the MPN domain; that stretch reads RICSPQDAAV…FISLKEKGIL (123 aa). The Zn(2+) site is built by His177, His179, and Asp190. Residues 177-190 carry the JAMM motif motif; it reads HNHPSGDPSPSNED.

Belongs to the UPF0758 family.

The polypeptide is UPF0758 protein CKR_0778 (Clostridium kluyveri (strain NBRC 12016)).